We begin with the raw amino-acid sequence, 527 residues long: Probable bifunctional tRNA threonylcarbamoyladenosine biosynthesis protein (527 aa).

The tract at residues 1 to 323 is kae1; the sequence is MPDIMPDDGL…YRADEVEVAW (323 aa). Positions 110, 114, and 131 each coordinate Fe cation. Residues 131–135, Asp163, Gly176, Glu180, and Asn256 contribute to the L-threonylcarbamoyladenylate site; that span reads YASGA. Fe cation is bound at residue Asp284. Positions 333–527 constitute a Protein kinase domain; it reads IGPHEGGVAR…HEVELRGRYL (195 aa). ATP-binding positions include 340–348 and Lys357; that span reads VARGAEAVV. Asp444 (proton acceptor; for kinase activity) is an active-site residue.

The protein in the N-terminal section; belongs to the KAE1 / TsaD family. It in the C-terminal section; belongs to the protein kinase superfamily. Tyr protein kinase family. BUD32 subfamily. Component of the KEOPS complex that consists of Kae1, Bud32, Cgi121 and Pcc1; the whole complex dimerizes. Requires Fe(2+) as cofactor.

The protein localises to the cytoplasm. The catalysed reaction is L-seryl-[protein] + ATP = O-phospho-L-seryl-[protein] + ADP + H(+). It carries out the reaction L-threonyl-[protein] + ATP = O-phospho-L-threonyl-[protein] + ADP + H(+). The enzyme catalyses L-threonylcarbamoyladenylate + adenosine(37) in tRNA = N(6)-L-threonylcarbamoyladenosine(37) in tRNA + AMP + H(+). Required for the formation of a threonylcarbamoyl group on adenosine at position 37 (t(6)A37) in tRNAs that read codons beginning with adenine. Is a component of the KEOPS complex that is probably involved in the transfer of the threonylcarbamoyl moiety of threonylcarbamoyl-AMP (TC-AMP) to the N6 group of A37. The Kae1 domain likely plays a direct catalytic role in this reaction. The Bud32 domain probably displays kinase activity that regulates Kae1 function. The protein is Probable bifunctional tRNA threonylcarbamoyladenosine biosynthesis protein of Methanoculleus marisnigri (strain ATCC 35101 / DSM 1498 / JR1).